A 229-amino-acid polypeptide reads, in one-letter code: Potassium/proton antiporter CemA (229 aa).

The next 4 helical transmembrane spans lie at 7–27, 114–134, 154–174, and 189–209; these read LIPL…SLSF, IICF…LVIL, ILLL…ELMI, and IISG…KYWI.

It belongs to the CemA family.

It is found in the plastid. The protein resides in the chloroplast inner membrane. The enzyme catalyses K(+)(in) + H(+)(out) = K(+)(out) + H(+)(in). Functionally, contributes to K(+)/H(+) antiport activity by supporting proton efflux to control proton extrusion and homeostasis in chloroplasts in a light-dependent manner to modulate photosynthesis. Prevents excessive induction of non-photochemical quenching (NPQ) under continuous-light conditions. Indirectly promotes efficient inorganic carbon uptake into chloroplasts. This Fagus sylvatica (Beechnut) protein is Potassium/proton antiporter CemA.